The primary structure comprises 328 residues: Aryl-hydrocarbon-interacting protein-like 1 (328 aa).

A PPIase FKBP-type domain is found at K53 to Q145. 3 TPR repeats span residues V178 to L211, N230 to I263, and V264 to M297.

In terms of assembly, directly interacts with NUB1.

It localises to the cytoplasm. The protein localises to the nucleus. May be important in protein trafficking and/or protein folding and stabilization. This Bos taurus (Bovine) protein is Aryl-hydrocarbon-interacting protein-like 1 (AIPL1).